The sequence spans 273 residues: Formamidopyrimidine-DNA glycosylase (273 aa).

Pro2 (schiff-base intermediate with DNA) is an active-site residue. Glu3 serves as the catalytic Proton donor. The active-site Proton donor; for beta-elimination activity is Lys60. His94, Arg113, and Lys154 together coordinate DNA. An FPG-type zinc finger spans residues 239-273 (EAYGRTGEPCRRCGTPIERIVVAQRSTHICPVCQA). The active-site Proton donor; for delta-elimination activity is the Arg263.

This sequence belongs to the FPG family. In terms of assembly, monomer. Zn(2+) serves as cofactor.

The enzyme catalyses Hydrolysis of DNA containing ring-opened 7-methylguanine residues, releasing 2,6-diamino-4-hydroxy-5-(N-methyl)formamidopyrimidine.. It catalyses the reaction 2'-deoxyribonucleotide-(2'-deoxyribose 5'-phosphate)-2'-deoxyribonucleotide-DNA = a 3'-end 2'-deoxyribonucleotide-(2,3-dehydro-2,3-deoxyribose 5'-phosphate)-DNA + a 5'-end 5'-phospho-2'-deoxyribonucleoside-DNA + H(+). Its function is as follows. Involved in base excision repair of DNA damaged by oxidation or by mutagenic agents. Acts as a DNA glycosylase that recognizes and removes damaged bases. Has a preference for oxidized purines, such as 7,8-dihydro-8-oxoguanine (8-oxoG). Has AP (apurinic/apyrimidinic) lyase activity and introduces nicks in the DNA strand. Cleaves the DNA backbone by beta-delta elimination to generate a single-strand break at the site of the removed base with both 3'- and 5'-phosphates. The sequence is that of Formamidopyrimidine-DNA glycosylase from Herpetosiphon aurantiacus (strain ATCC 23779 / DSM 785 / 114-95).